The sequence spans 155 residues: 3-dehydroquinate dehydratase (155 aa).

Residue Y31 is the Proton acceptor of the active site. Positions 83, 89, and 96 each coordinate substrate. H109 serves as the catalytic Proton donor. Substrate is bound by residues 110 to 111 (LS) and R120.

Belongs to the type-II 3-dehydroquinase family. As to quaternary structure, homododecamer.

The catalysed reaction is 3-dehydroquinate = 3-dehydroshikimate + H2O. The protein operates within metabolic intermediate biosynthesis; chorismate biosynthesis; chorismate from D-erythrose 4-phosphate and phosphoenolpyruvate: step 3/7. Functionally, catalyzes a trans-dehydration via an enolate intermediate. The sequence is that of 3-dehydroquinate dehydratase from Laribacter hongkongensis (strain HLHK9).